Reading from the N-terminus, the 745-residue chain is Isocitrate dehydrogenase [NADP] 2 (745 aa).

Asparagine 87 and serine 89 together coordinate NADP(+). Residues serine 134, asparagine 137, arginine 141, arginine 147, and lysine 257 each contribute to the D-threo-isocitrate site. Residue aspartate 352 participates in Mg(2+) binding. 2 residues coordinate D-threo-isocitrate: tyrosine 422 and arginine 550. Aspartate 551 and aspartate 555 together coordinate Mg(2+). NADP(+)-binding residues include glycine 587, serine 588, alanine 589, histidine 592, arginine 603, aspartate 605, and arginine 652.

The protein belongs to the monomeric-type IDH family. In terms of assembly, may form homotrimers. Also forms homotetramers at low salt concentration, which are dissociated into homodimers, but not into monomers, at high salt concentration (1 M). The cofactor is Mg(2+).

The catalysed reaction is D-threo-isocitrate + NADP(+) = 2-oxoglutarate + CO2 + NADPH. In terms of biological role, catalyzes the oxidative decarboxylation of isocitrate to 2-oxoglutarate and carbon dioxide with the concomitant reduction of NADP(+). Cannot use NAD(+). In Mycobacterium tuberculosis (strain ATCC 25618 / H37Rv), this protein is Isocitrate dehydrogenase [NADP] 2.